The following is a 151-amino-acid chain: 3-hydroxyacyl-[acyl-carrier-protein] dehydratase FabZ (151 aa).

Residue histidine 54 is part of the active site.

It belongs to the thioester dehydratase family. FabZ subfamily.

The protein localises to the cytoplasm. It carries out the reaction a (3R)-hydroxyacyl-[ACP] = a (2E)-enoyl-[ACP] + H2O. In terms of biological role, involved in unsaturated fatty acids biosynthesis. Catalyzes the dehydration of short chain beta-hydroxyacyl-ACPs and long chain saturated and unsaturated beta-hydroxyacyl-ACPs. This chain is 3-hydroxyacyl-[acyl-carrier-protein] dehydratase FabZ, found in Salmonella agona (strain SL483).